The primary structure comprises 796 residues: Probable phosphoketolase 2 (796 aa).

The protein belongs to the XFP family. The cofactor is thiamine diphosphate.

This chain is Probable phosphoketolase 2, found in Lactiplantibacillus plantarum (strain ATCC BAA-793 / NCIMB 8826 / WCFS1) (Lactobacillus plantarum).